Reading from the N-terminus, the 186-residue chain is UPF0200 protein Hbut_0338 (186 aa).

13–20 (GMPGSGKS) provides a ligand contact to ATP.

It belongs to the UPF0200 family.

In Hyperthermus butylicus (strain DSM 5456 / JCM 9403 / PLM1-5), this protein is UPF0200 protein Hbut_0338.